The following is a 766-amino-acid chain: DNA ligase (766 aa).

Positions 1–30 are disordered; sequence MSTVNAKGAKPATDANGQSLNPEEPSEALR. Residues 57-61, 106-107, and Glu-141 contribute to the NAD(+) site; these read DAEYD and SL. The active-site N6-AMP-lysine intermediate is the Lys-143. 4 residues coordinate NAD(+): Arg-164, Glu-201, Lys-317, and Lys-341. Zn(2+) contacts are provided by Cys-435, Cys-438, Cys-454, and Cys-460. A BRCT domain is found at 669-758; that stretch reads STPRTLEGVT…PEAFGDRADA (90 aa). The segment at 747–766 is disordered; that stretch reads QGPEAFGDRADAADQPAAGE.

Belongs to the NAD-dependent DNA ligase family. LigA subfamily. The cofactor is Mg(2+). Mn(2+) is required as a cofactor.

It catalyses the reaction NAD(+) + (deoxyribonucleotide)n-3'-hydroxyl + 5'-phospho-(deoxyribonucleotide)m = (deoxyribonucleotide)n+m + AMP + beta-nicotinamide D-nucleotide.. Functionally, DNA ligase that catalyzes the formation of phosphodiester linkages between 5'-phosphoryl and 3'-hydroxyl groups in double-stranded DNA using NAD as a coenzyme and as the energy source for the reaction. It is essential for DNA replication and repair of damaged DNA. This is DNA ligase from Kocuria rhizophila (strain ATCC 9341 / DSM 348 / NBRC 103217 / DC2201).